An 84-amino-acid polypeptide reads, in one-letter code: Large ribosomal subunit protein bL27 (84 aa).

Residues 1 to 21 (MAHKKGQGSTRNGRDSHSKRL) form a disordered region. The span at 12 to 21 (NGRDSHSKRL) shows a compositional bias: basic and acidic residues.

The protein belongs to the bacterial ribosomal protein bL27 family.

The protein is Large ribosomal subunit protein bL27 of Methylacidiphilum infernorum (isolate V4) (Methylokorus infernorum (strain V4)).